We begin with the raw amino-acid sequence, 864 residues long: Bifunctional uridylyltransferase/uridylyl-removing enzyme (864 aa).

A uridylyltransferase region spans residues 1–328 (MLFPYFPLSE…QTNEPVQVRL (328 aa)). The uridylyl-removing stretch occupies residues 329 to 686 (LDKEFQCVNN…ISNRFSEGGT (358 aa)). The 117-residue stretch at 446–562 (VDEHIVRTLL…LHFAEAVQNN (117 aa)) folds into the HD domain. 2 ACT domains span residues 687-766 (EIFV…TFRA) and 793-864 (EMEL…LEPK).

The protein belongs to the GlnD family. Mg(2+) serves as cofactor.

It carries out the reaction [protein-PII]-L-tyrosine + UTP = [protein-PII]-uridylyl-L-tyrosine + diphosphate. The catalysed reaction is [protein-PII]-uridylyl-L-tyrosine + H2O = [protein-PII]-L-tyrosine + UMP + H(+). Uridylyltransferase (UTase) activity is inhibited by glutamine, while glutamine activates uridylyl-removing (UR) activity. In terms of biological role, modifies, by uridylylation and deuridylylation, the PII regulatory proteins (GlnB and homologs), in response to the nitrogen status of the cell that GlnD senses through the glutamine level. Under low glutamine levels, catalyzes the conversion of the PII proteins and UTP to PII-UMP and PPi, while under higher glutamine levels, GlnD hydrolyzes PII-UMP to PII and UMP (deuridylylation). Thus, controls uridylylation state and activity of the PII proteins, and plays an important role in the regulation of nitrogen assimilation and metabolism. The polypeptide is Bifunctional uridylyltransferase/uridylyl-removing enzyme (Pasteurella multocida (strain Pm70)).